The following is a 240-amino-acid chain: Uridylate kinase (240 aa).

Residue 12–15 (KLSG) coordinates ATP. An involved in allosteric activation by GTP region spans residues 20-25 (GDKGFG). Glycine 54 provides a ligand contact to UMP. 2 residues coordinate ATP: glycine 55 and arginine 59. Residues aspartate 74 and 135-142 (TGSPYFST) contribute to the UMP site. ATP-binding residues include asparagine 163, tyrosine 169, and aspartate 172.

It belongs to the UMP kinase family. Homohexamer.

The protein resides in the cytoplasm. It carries out the reaction UMP + ATP = UDP + ADP. Its pathway is pyrimidine metabolism; CTP biosynthesis via de novo pathway; UDP from UMP (UMPK route): step 1/1. With respect to regulation, allosterically activated by GTP. Inhibited by UTP. Its function is as follows. Catalyzes the reversible phosphorylation of UMP to UDP. In Limosilactobacillus reuteri (strain DSM 20016) (Lactobacillus reuteri), this protein is Uridylate kinase.